The sequence spans 369 residues: MASTTLLQPALGLPSRVGPRSPLSLPKIPRVCTHTSAPSTSKYCDSSSVIESTLGRQTSVAGRPWLAPRPAPQQSRGDLLVSKSGAAGGMGAHGGGLGEPVDNWIKKLLVGVAAAYIGLVVLVPFLNVFVQAFAKGIIPFLEHCADPDFLHALKMTLMLAFVTVPLNTVFGTVAAINLTRNEFPGKVFLMSLLDLPFSISPVVTGLMLTLLYGRTGWFAALLRETGINVVFAFTGMALATMFVTLPFVVRELIPILENMDLSQEEAARTLGANDWQVFWNVTLPNIRWGLLYGVILCNARAMGEFGAVSVISGNIIGRTQTLTLFVESAYKEYNTEAAFAAAVLLSALALGTLWIKDKVEEAAAAESRK.

The interval 1 to 21 (MASTTLLQPALGLPSRVGPRS) is disordered. Residues 1 to 82 (MASTTLLQPA…QQSRGDLLVS (82 aa)) constitute a chloroplast transit peptide. A run of 5 helical transmembrane segments spans residues 110–130 (VGVAAAYIGLVVLVPFLNVFV), 156–176 (TLMLAFVTVPLNTVFGTVAAI), 187–207 (VFLMSLLDLPFSISPVVTGLM), 229–249 (VVFAFTGMALATMFVTLPFVV), and 335–355 (TEAAFAAAVLLSALALGTLWI). The ABC transmembrane type-1 domain occupies 153–356 (LKMTLMLAFV…ALALGTLWIK (204 aa)).

This sequence belongs to the ATP-binding cassette (ABC) (TC 3.A.1) superfamily. In terms of assembly, part of the chloroplast sulfate permease holocomplex. May form a heterodimer with SLUP1.

Its subcellular location is the plastid. The protein localises to the chloroplast membrane. Its function is as follows. Part of the ABC-type chloroplast envelope-localized sulfate transporter. The polypeptide is Sulfate permease 2, chloroplastic (SULP2) (Chlamydomonas reinhardtii (Chlamydomonas smithii)).